A 450-amino-acid chain; its full sequence is Tubulin alpha-1 chain (450 aa).

Residues Gln-11, Glu-71, Gly-144, Thr-145, Thr-179, Asn-206, and Asn-228 each coordinate GTP. Position 71 (Glu-71) interacts with Mg(2+). Glu-254 is a catalytic residue. Position 349 is a phosphothreonine (Thr-349). The tract at residues 431–450 (DYEEVGGEGAEDDDEEGDEY) is disordered.

Belongs to the tubulin family. As to quaternary structure, dimer of alpha and beta chains. A typical microtubule is a hollow water-filled tube with an outer diameter of 25 nm and an inner diameter of 15 nM. Alpha-beta heterodimers associate head-to-tail to form protofilaments running lengthwise along the microtubule wall with the beta-tubulin subunit facing the microtubule plus end conferring a structural polarity. Microtubules usually have 13 protofilaments but different protofilament numbers can be found in some organisms and specialized cells. It depends on Mg(2+) as a cofactor. Undergoes a tyrosination/detyrosination cycle, the cyclic removal and re-addition of a C-terminal tyrosine residue by the enzymes tubulin tyrosine carboxypeptidase (TTCP) and tubulin tyrosine ligase (TTL), respectively.

It is found in the cytoplasm. It localises to the cytoskeleton. The enzyme catalyses GTP + H2O = GDP + phosphate + H(+). Functionally, tubulin is the major constituent of microtubules, a cylinder consisting of laterally associated linear protofilaments composed of alpha- and beta-tubulin heterodimers. Microtubules grow by the addition of GTP-tubulin dimers to the microtubule end, where a stabilizing cap forms. Below the cap, tubulin dimers are in GDP-bound state, owing to GTPase activity of alpha-tubulin. This chain is Tubulin alpha-1 chain (TUBA1), found in Arabidopsis thaliana (Mouse-ear cress).